Reading from the N-terminus, the 462-residue chain is Chromosomal replication initiator protein DnaA (462 aa).

Residues 1-84 (MAVSLWQQCI…RFDIGSRPSA (84 aa)) are domain I, interacts with DnaA modulators. The tract at residues 84-125 (APRPVQATAAVERPKFEQNTKPAKTSFNVNSPEPAMAANHRS) is domain II. The interval 126–342 (NINRTYQFEN…GALNRVIANA (217 aa)) is domain III, AAA+ region. 4 residues coordinate ATP: G170, G172, K173, and T174. The segment at 343 to 462 (NFTGRPITID…YANLIRTLSS (120 aa)) is domain IV, binds dsDNA.

Belongs to the DnaA family. In terms of assembly, oligomerizes as a right-handed, spiral filament on DNA at oriC.

It is found in the cytoplasm. Its function is as follows. Plays an essential role in the initiation and regulation of chromosomal replication. ATP-DnaA binds to the origin of replication (oriC) to initiate formation of the DNA replication initiation complex once per cell cycle. Binds the DnaA box (a 9 base pair repeat at the origin) and separates the double-stranded (ds)DNA. Forms a right-handed helical filament on oriC DNA; dsDNA binds to the exterior of the filament while single-stranded (ss)DNA is stabiized in the filament's interior. The ATP-DnaA-oriC complex binds and stabilizes one strand of the AT-rich DNA unwinding element (DUE), permitting loading of DNA polymerase. After initiation quickly degrades to an ADP-DnaA complex that is not apt for DNA replication. Binds acidic phospholipids. The chain is Chromosomal replication initiator protein DnaA from Shewanella sediminis (strain HAW-EB3).